We begin with the raw amino-acid sequence, 95 residues long: Large ribosomal subunit protein bL25 (95 aa).

Belongs to the bacterial ribosomal protein bL25 family. Part of the 50S ribosomal subunit; part of the 5S rRNA/L5/L18/L25 subcomplex. Contacts the 5S rRNA. Binds to the 5S rRNA independently of L5 and L18.

In terms of biological role, this is one of the proteins that binds to the 5S RNA in the ribosome where it forms part of the central protuberance. This chain is Large ribosomal subunit protein bL25, found in Actinobacillus succinogenes (strain ATCC 55618 / DSM 22257 / CCUG 43843 / 130Z).